Reading from the N-terminus, the 258-residue chain is Pyridoxal phosphate homeostasis protein (258 aa).

K47 is subject to N6-(pyridoxal phosphate)lysine.

Belongs to the pyridoxal phosphate-binding protein YggS/PROSC family.

Functionally, pyridoxal 5'-phosphate (PLP)-binding protein, which is involved in PLP homeostasis. This is Pyridoxal phosphate homeostasis protein from Mycobacterium bovis (strain ATCC BAA-935 / AF2122/97).